A 104-amino-acid chain; its full sequence is Circadian clock oscillator protein KaiB (104 aa).

It belongs to the KaiB family. The KaiABC complex composition changes during the circadian cycle to control KaiC phosphorylation. Complexes KaiC(6), KaiA(2-4):KaiC(6), KaiB(6):KaiC(6) and KaiC(6):KaiB(6):KaiA(12) are among the most important forms, many form cooperatively. Undergoes a major conformational rearrangment; in the free state forms homotetramers as a dimer of dimers. When bound to the CI domain of KaiC switches to a monomeric thioredoxin-fold (KaiB(fs)). KaiB(fs) binds CikA, leading it to dephosphorylate phospho-RpaA.

Key component of the KaiABC oscillator complex, which constitutes the main circadian regulator in cyanobacteria. Complex composition changes during the circadian cycle to control KaiC phosphorylation. KaiA stimulates KaiC autophosphorylation, while KaiB sequesters KaiA, leading to KaiC autodephosphorylation. Phospho-Ser-431 KaiC accumulation triggers binding of KaiB to form the KaiB(6):KaiC(6) complex, leading to changes in output regulators CikA and SasA. KaiB switches to a thioredoxin-like fold (KaiB(fs)) when bound to KaiC. KaiB(6):KaiC(6) formation exposes a site for KaiA binding that sequesters KaiA from KaiC, making the KaiC(6):KaiB(6):KaiA(12) complex that results in KaiC autodephosphorylation. Functionally, a metamorphic protein which reversibly switches between an inactive tetrameric fold and a rare, thioredoxin-like monomeric fold (KaiB(fs)). KaiB(fs) binds phospho-KaiC, KaiA and CikA. KaiA and CikA compete for binding to KaiB(fs), and KaiB(fs) and SasA compete for binding to KaiC, thus the clock oscillator and output signal pathway are tightly coupled. The chain is Circadian clock oscillator protein KaiB from Picosynechococcus sp. (strain ATCC 27264 / PCC 7002 / PR-6) (Agmenellum quadruplicatum).